We begin with the raw amino-acid sequence, 355 residues long: Phosphoribosylformylglycinamidine cyclo-ligase (355 aa).

Belongs to the AIR synthase family.

The protein resides in the cytoplasm. The catalysed reaction is 2-formamido-N(1)-(5-O-phospho-beta-D-ribosyl)acetamidine + ATP = 5-amino-1-(5-phospho-beta-D-ribosyl)imidazole + ADP + phosphate + H(+). It functions in the pathway purine metabolism; IMP biosynthesis via de novo pathway; 5-amino-1-(5-phospho-D-ribosyl)imidazole from N(2)-formyl-N(1)-(5-phospho-D-ribosyl)glycinamide: step 2/2. This is Phosphoribosylformylglycinamidine cyclo-ligase from Beijerinckia indica subsp. indica (strain ATCC 9039 / DSM 1715 / NCIMB 8712).